A 393-amino-acid chain; its full sequence is 2,3,4,5-tetrahydropyridine-2,6-dicarboxylate N-succinyltransferase (393 aa).

The Acyl-anhydride intermediate role is filled by Glu-261. Succinyl-CoA-binding positions include Arg-263, Gly-278, Ser-281, Ala-304, 319 to 320 (DA), Gly-327, Lys-356, and 369 to 372 (RQDS).

Belongs to the type 2 tetrahydrodipicolinate N-succinyltransferase family. Homotrimer.

The protein localises to the cytoplasm. It catalyses the reaction (S)-2,3,4,5-tetrahydrodipicolinate + succinyl-CoA + H2O = (S)-2-succinylamino-6-oxoheptanedioate + CoA. The protein operates within amino-acid biosynthesis; L-lysine biosynthesis via DAP pathway; LL-2,6-diaminopimelate from (S)-tetrahydrodipicolinate (succinylase route): step 1/3. In terms of biological role, catalyzes the conversion of the cyclic tetrahydrodipicolinate (THDP) into the acyclic N-succinyl-L-2-amino-6-oxopimelate using succinyl-CoA. This Nitratiruptor sp. (strain SB155-2) protein is 2,3,4,5-tetrahydropyridine-2,6-dicarboxylate N-succinyltransferase.